We begin with the raw amino-acid sequence, 106 residues long: YcgL domain-containing protein HCH_02617 (106 aa).

One can recognise a YcgL domain in the interval 6–90 (RLISIFRSSK…VQDDYMMDVV (85 aa)).

The chain is YcgL domain-containing protein HCH_02617 from Hahella chejuensis (strain KCTC 2396).